A 116-amino-acid polypeptide reads, in one-letter code: Putative membrane protein insertion efficiency factor (116 aa).

The protein belongs to the UPF0161 family.

It localises to the cell inner membrane. Its function is as follows. Could be involved in insertion of integral membrane proteins into the membrane. This is Putative membrane protein insertion efficiency factor from Bartonella tribocorum (strain CIP 105476 / IBS 506).